Consider the following 208-residue polypeptide: Small ribosomal subunit protein uS4 (208 aa).

Positions 31 to 51 are disordered; that stretch reads SALDKRAYGPGQHGQRRAKTS. The 59-residue stretch at 98–156 folds into the S4 RNA-binding domain; the sequence is RRLDNVVYRMGFATTRSSARQLVTHGHVLVDGKRLDIPSYFVRSGQKIEIKEKTKSNPQ.

It belongs to the universal ribosomal protein uS4 family. In terms of assembly, part of the 30S ribosomal subunit. Contacts protein S5. The interaction surface between S4 and S5 is involved in control of translational fidelity.

Functionally, one of the primary rRNA binding proteins, it binds directly to 16S rRNA where it nucleates assembly of the body of the 30S subunit. Its function is as follows. With S5 and S12 plays an important role in translational accuracy. This is Small ribosomal subunit protein uS4 from Helicobacter pylori (strain HPAG1).